We begin with the raw amino-acid sequence, 473 residues long: Pre-mRNA-splicing factor PRP46 (473 aa).

Residues 1–10 (MSTSLETPSG) are compositionally biased toward polar residues. Disordered stretches follow at residues 1 to 21 (MSTSLETPSGASAGPSIVASG) and 103 to 126 (GPNVKLIGGPEAEKASSSTPQAVA). WD repeat units follow at residues 180–219 (GHMGWVRAVAMDPGNQWFATGAGDRVIKIWDLASGELKLS), 222–261 (GHISTIRGLAVSDRHPYLFSCAEDKMVKCWDLETNKVIRH), 264–303 (GHFSGVYSLSVHPTLDVLVTGGRDASVRVWDMRTRANIFT), 306–347 (GHTS…NTLT), 349–388 (HKKSVRALAIHPTEYSFASASSGGNNIKKWKCPEGIFVNN), 391–429 (GHEAIINTLSINSENVLFSGADNGTLTLWDYKTGLPFQH), and 440–473 (DAEAGVFCSTFDKTGTRLITGGADKTIKVYSEQA).

It belongs to the WD repeat PRL1/PRL2 family. Associated with the spliceosome.

The protein localises to the cytoplasm. The protein resides in the nucleus. Its function is as follows. Involved in pre-mRNA splicing and required for cell cycle progression at G2/M. This chain is Pre-mRNA-splicing factor PRP46 (PRP46), found in Cryptococcus neoformans var. neoformans serotype D (strain JEC21 / ATCC MYA-565) (Filobasidiella neoformans).